Reading from the N-terminus, the 340-residue chain is Ketol-acid reductoisomerase (NADP(+)) (340 aa).

A KARI N-terminal Rossmann domain is found at 3 to 182 (VQMEYEKDVK…GAARVGLLET (180 aa)). NADP(+) is bound by residues 26 to 29 (YGSQ), Arg-49, Ser-53, and 83 to 86 (DEIQ). His-108 is a catalytic residue. NADP(+) is bound at residue Gly-134. Residues 183 to 328 (TYKEETEEDL…AELRKAMPFV (146 aa)) enclose the KARI C-terminal knotted domain. Asp-191, Glu-195, Glu-227, and Glu-231 together coordinate Mg(2+). Ser-252 is a binding site for substrate.

Belongs to the ketol-acid reductoisomerase family. Mg(2+) is required as a cofactor.

It carries out the reaction (2R)-2,3-dihydroxy-3-methylbutanoate + NADP(+) = (2S)-2-acetolactate + NADPH + H(+). The enzyme catalyses (2R,3R)-2,3-dihydroxy-3-methylpentanoate + NADP(+) = (S)-2-ethyl-2-hydroxy-3-oxobutanoate + NADPH + H(+). Its pathway is amino-acid biosynthesis; L-isoleucine biosynthesis; L-isoleucine from 2-oxobutanoate: step 2/4. It functions in the pathway amino-acid biosynthesis; L-valine biosynthesis; L-valine from pyruvate: step 2/4. Its function is as follows. Involved in the biosynthesis of branched-chain amino acids (BCAA). Catalyzes an alkyl-migration followed by a ketol-acid reduction of (S)-2-acetolactate (S2AL) to yield (R)-2,3-dihydroxy-isovalerate. In the isomerase reaction, S2AL is rearranged via a Mg-dependent methyl migration to produce 3-hydroxy-3-methyl-2-ketobutyrate (HMKB). In the reductase reaction, this 2-ketoacid undergoes a metal-dependent reduction by NADPH to yield (R)-2,3-dihydroxy-isovalerate. In Streptococcus gordonii (strain Challis / ATCC 35105 / BCRC 15272 / CH1 / DL1 / V288), this protein is Ketol-acid reductoisomerase (NADP(+)).